Consider the following 591-residue polypeptide: Metalloendopeptidase OPG085 (591 aa).

Histidine 41 serves as a coordination point for Zn(2+). Glutamate 44 is an active-site residue. Positions 45 and 112 each coordinate Zn(2+).

This sequence belongs to the peptidase M44 family. Zn(2+) serves as cofactor. Post-translationally, undergoes proteolytic processing during the course of infection. May be cleaved into 46 kDa and 22 kDa products (Potential).

It localises to the virion. Probably involved in maturation of some viral proteins by processing them preferentially at Ala-Gly-|-Ser/Thr/Lys motifs. Does not seem to be responsible for the cleavage of major core proteins. The sequence is that of Metalloendopeptidase OPG085 (OPG085) from Homo sapiens (Human).